Here is an 887-residue protein sequence, read N- to C-terminus: Alanine--tRNA ligase (887 aa).

4 residues coordinate Zn(2+): H564, H568, C676, and H680.

The protein belongs to the class-II aminoacyl-tRNA synthetase family. It depends on Zn(2+) as a cofactor.

The protein resides in the cytoplasm. It carries out the reaction tRNA(Ala) + L-alanine + ATP = L-alanyl-tRNA(Ala) + AMP + diphosphate. Functionally, catalyzes the attachment of alanine to tRNA(Ala) in a two-step reaction: alanine is first activated by ATP to form Ala-AMP and then transferred to the acceptor end of tRNA(Ala). Also edits incorrectly charged Ser-tRNA(Ala) and Gly-tRNA(Ala) via its editing domain. The sequence is that of Alanine--tRNA ligase from Agrobacterium fabrum (strain C58 / ATCC 33970) (Agrobacterium tumefaciens (strain C58)).